The primary structure comprises 262 residues: Acetaldehyde dehydrogenase 7 (262 aa).

10–13 contacts NAD(+); the sequence is SGNI. The Acyl-thioester intermediate role is filled by cysteine 128. Residue 159 to 167 coordinates NAD(+); that stretch reads SAGPGTRAN.

The protein belongs to the acetaldehyde dehydrogenase family.

The enzyme catalyses acetaldehyde + NAD(+) + CoA = acetyl-CoA + NADH + H(+). This is Acetaldehyde dehydrogenase 7 from Rhodococcus jostii (strain RHA1).